We begin with the raw amino-acid sequence, 180 residues long: Superoxide dismutase [Cu-Zn] (180 aa).

The signal sequence occupies residues 1 to 19 (MFMNLLTQVSNAIFPQVEA). Positions 68, 70, and 85 each coordinate Cu cation. A disulfide bond links Cys79 and Cys171. 4 residues coordinate Zn(2+): His85, His93, His102, and Asp105. His142 lines the Cu cation pocket.

This sequence belongs to the Cu-Zn superoxide dismutase family. As to quaternary structure, homodimer. Cu cation serves as cofactor. The cofactor is Zn(2+).

The protein resides in the cytoplasm. It carries out the reaction 2 superoxide + 2 H(+) = H2O2 + O2. With respect to regulation, the insertion of copper which activates the protein requires glutathione. This is independent of copper chaperone for SOD1 (CCS), which activates orthologs. Protects cells against oxidative stress by converting superoxide radicals to hydrogen peroxide. Required for normal brood size. May be involved in regulating mpk-1 phosphorylation downstream of phosphatase ptp-2 during oocyte maturation. The protein is Superoxide dismutase [Cu-Zn] (sod-1) of Caenorhabditis elegans.